We begin with the raw amino-acid sequence, 196 residues long: MLERIKGCFTESIQTQIAAAEALPDAISCAAMALVQSLLNGNKILCCGNGTSAANAQHFAASMINRFETERPSLPAIALNADNVVLTAITNDRLHDEVYAKQVRALGQAGDVLLAISTRGNSRDIVKAVEAAVTRDMTIVALTGYDGGELAGLLGQLDVEIRIPSHRGARVQELHMLTVNCLCDLIDNTLFPHQDD.

Positions 34 to 196 (LVQSLLNGNK…DNTLFPHQDD (163 aa)) constitute an SIS domain.

The protein belongs to the SIS family. DiaA subfamily. As to quaternary structure, homotetramer; dimer of dimers.

Functionally, required for the timely initiation of chromosomal replication via direct interactions with the DnaA initiator protein. In Yersinia pseudotuberculosis serotype O:1b (strain IP 31758), this protein is DnaA initiator-associating protein DiaA.